The sequence spans 462 residues: Proline--tRNA ligase (462 aa).

This sequence belongs to the class-II aminoacyl-tRNA synthetase family. ProS type 3 subfamily. As to quaternary structure, homodimer.

The protein resides in the cytoplasm. The catalysed reaction is tRNA(Pro) + L-proline + ATP = L-prolyl-tRNA(Pro) + AMP + diphosphate. Its function is as follows. Catalyzes the attachment of proline to tRNA(Pro) in a two-step reaction: proline is first activated by ATP to form Pro-AMP and then transferred to the acceptor end of tRNA(Pro). The protein is Proline--tRNA ligase of Thermoplasma volcanium (strain ATCC 51530 / DSM 4299 / JCM 9571 / NBRC 15438 / GSS1).